The primary structure comprises 187 residues: MSLNQISKVYATALLELAQEANSLESTEEELSSLVGVFFSDDTIRHYFLSPLVDPSEKEQTAAKSVQGKASEIVANFITLVVRKNRFLYLKDILEDYRSGVDRLKNRSSLRIVSKDSLGKEAVDQITKSISSKFGREVRVTEHTDLNLIGGFKIYIDDFLIDASIRAKLAGTREALLQKKIPVGAFE.

Belongs to the ATPase delta chain family. F-type ATPases have 2 components, F(1) - the catalytic core - and F(0) - the membrane proton channel. F(1) has five subunits: alpha(3), beta(3), gamma(1), delta(1), epsilon(1). F(0) has three main subunits: a(1), b(2) and c(10-14). The alpha and beta chains form an alternating ring which encloses part of the gamma chain. F(1) is attached to F(0) by a central stalk formed by the gamma and epsilon chains, while a peripheral stalk is formed by the delta and b chains.

The protein resides in the cell inner membrane. F(1)F(0) ATP synthase produces ATP from ADP in the presence of a proton or sodium gradient. F-type ATPases consist of two structural domains, F(1) containing the extramembraneous catalytic core and F(0) containing the membrane proton channel, linked together by a central stalk and a peripheral stalk. During catalysis, ATP synthesis in the catalytic domain of F(1) is coupled via a rotary mechanism of the central stalk subunits to proton translocation. Its function is as follows. This protein is part of the stalk that links CF(0) to CF(1). It either transmits conformational changes from CF(0) to CF(1) or is implicated in proton conduction. This chain is ATP synthase subunit delta, found in Leptospira biflexa serovar Patoc (strain Patoc 1 / Ames).